Here is a 254-residue protein sequence, read N- to C-terminus: 3-deoxy-manno-octulosonate cytidylyltransferase (254 aa).

This sequence belongs to the KdsB family.

The protein localises to the cytoplasm. It catalyses the reaction 3-deoxy-alpha-D-manno-oct-2-ulosonate + CTP = CMP-3-deoxy-beta-D-manno-octulosonate + diphosphate. The protein operates within nucleotide-sugar biosynthesis; CMP-3-deoxy-D-manno-octulosonate biosynthesis; CMP-3-deoxy-D-manno-octulosonate from 3-deoxy-D-manno-octulosonate and CTP: step 1/1. It participates in bacterial outer membrane biogenesis; lipopolysaccharide biosynthesis. Functionally, activates KDO (a required 8-carbon sugar) for incorporation into bacterial lipopolysaccharide in Gram-negative bacteria. This is 3-deoxy-manno-octulosonate cytidylyltransferase from Polynucleobacter asymbioticus (strain DSM 18221 / CIP 109841 / QLW-P1DMWA-1) (Polynucleobacter necessarius subsp. asymbioticus).